A 110-amino-acid polypeptide reads, in one-letter code: UPF0060 membrane protein Francci3_2786 (110 aa).

A run of 4 helical transmembrane segments spans residues 8 to 28 (LLFVVAAVTEIGGAWLVWQGV), 33 to 53 (GPVWVGLGIGFLAAYGFVATL), 62 to 82 (ILAAYGGVFVAGSLLWGVAVD), and 87 to 107 (DRYDLAGAAICLLGVAVIMYA).

Belongs to the UPF0060 family.

It is found in the cell membrane. The chain is UPF0060 membrane protein Francci3_2786 from Frankia casuarinae (strain DSM 45818 / CECT 9043 / HFP020203 / CcI3).